A 1557-amino-acid chain; its full sequence is ABC transporter atnG (1557 aa).

A run of 5 helical transmembrane segments spans residues 27 to 47 (FTLY…LILA), 70 to 90 (LKLL…AFWM), 99 to 119 (LTIA…YLIH), 131 to 151 (IISI…RTIW), and 159 to 179 (VSAI…LETW). 2 N-linked (GlcNAc...) asparagine glycosylation sites follow: asparagine 202 and asparagine 249. 6 helical membrane passes run 256–276 (AGAM…AGVF), 311–331 (ATLL…ATAT), 385–405 (YIHD…LLYN), 412–432 (IAPI…AMMA), 490–510 (LLIA…IVSF), and 531–551 (LTSL…VESI). An ABC transmembrane type-1 1 domain is found at 279 to 556 (LCQSGFIISQ…LVESISETAM (278 aa)). The 237-residue stretch at 593–829 (AFEVDVGWKN…LDYIQGFAIA (237 aa)) folds into the ABC transporter 1 domain. 625-632 (GAVGCGKT) is an ATP binding site. An N-linked (GlcNAc...) asparagine glycan is attached at asparagine 667. The chain crosses the membrane as a helical span at residues 882-902 (LVYFGLMAIFVFLQAFPTVWV). In terms of domain architecture, ABC transmembrane type-1 2 spans 882–1162 (LVYFGLMAIF…LITDWTVLET (281 aa)). The N-linked (GlcNAc...) asparagine glycan is linked to asparagine 916. The next 4 helical transmembrane spans lie at 921-941 (IGVY…TACF), 996-1016 (AVLQ…IIAV), 1020-1040 (YITA…TFYM), and 1105-1125 (LSLV…GIAV). N-linked (GlcNAc...) asparagine glycosylation occurs at asparagine 1132. The helical transmembrane segment at 1135–1155 (SLGLALVNVVSLSASVKALIT) threads the bilayer. The 233-residue stretch at 1199–1431 (VEYKNVSAFY…PSVFRELYKS (233 aa)) folds into the ABC transporter 2 domain. 2 N-linked (GlcNAc...) asparagine glycosylation sites follow: asparagine 1203 and asparagine 1218. An ATP-binding site is contributed by 1233-1240 (GRSGSGKS). Disordered regions lie at residues 1439–1464 (ERQE…EELR) and 1503–1557 (RTRS…RGLH). Positions 1507 to 1522 (RSRDHSAERRESKRYS) are enriched in basic and acidic residues.

It belongs to the ABC transporter superfamily. ABCC family. Conjugate transporter (TC 3.A.1.208) subfamily.

It is found in the cell membrane. In terms of biological role, ABC transporter; part of the gene cluster that mediates the biosynthesis of aspercryptins, linear lipopeptides built from six amino acids including 2 highly unusual and nonproteogenic amino acids, 2-amino-octanoic acid (2aoa) and 2-amino-dodecanol (2adol). The sequence is that of ABC transporter atnG from Emericella nidulans (strain FGSC A4 / ATCC 38163 / CBS 112.46 / NRRL 194 / M139) (Aspergillus nidulans).